A 222-amino-acid polypeptide reads, in one-letter code: Eukaryotic translation initiation factor 3 subunit K (222 aa).

Residues 46-208 (YDLEANLAVL…KIKTKNITEK (163 aa)) form the PCI domain.

It belongs to the eIF-3 subunit K family. In terms of assembly, component of the eukaryotic translation initiation factor 3 (eIF-3) complex. The eIF-3 complex interacts with pix.

The protein resides in the cytoplasm. Functionally, component of the eukaryotic translation initiation factor 3 (eIF-3) complex, which is involved in protein synthesis of a specialized repertoire of mRNAs and, together with other initiation factors, stimulates binding of mRNA and methionyl-tRNAi to the 40S ribosome. The eIF-3 complex specifically targets and initiates translation of a subset of mRNAs involved in cell proliferation. The chain is Eukaryotic translation initiation factor 3 subunit K from Drosophila mojavensis (Fruit fly).